An 888-amino-acid polypeptide reads, in one-letter code: MALLMTCFVIVFAASQPCQTPDDLVAAASPGHIMIGGLFAIHEKILSSEEPRKPEIQKCASFEIPTFLQTLAMIHSIEMINNSTLLSGVKLGYEIYDTCTDITVAMAAALRCVSKFNSSREIVEFKCDYSNYVPRVKAVIGAGYSEISMAVSRTLSLQLMPQVSYESTAETLSDKIQFPSFLRSVSSDFYQTKAMAHLIQKSGWIIGILTTDDDYGLNTLAVQTAANNVCIAFREALPAFRSDITIEVRINQTLERTIAEAKVNVIVVFLSQFHVFNLFSKAIERNINKIWIVSSWSTSTIATIPDVKRIGKVVGFTFRRGNVSSFQSFLQNLCVFPSDNNKPLNEHAMLSACAHAKDSDLSQCVSNCSQGTLATKDSERNFFLRTDFLWDYTELGLVHSIQLAVLALSYAIQDLQADFQPWELLAVLKNVTFMEGWSSFHFYAHGAMNTGYNIVLWREINGHMSIKMAQYDLKNDVFIVTNQETKNEHRNLKKIQSKFFKECSSGQMKKTTKSQHTCCYECVTCPENHYSNQTDTDHYLLYNNETHWAPVGSTMCFEKEMEYLDSLAILLLALSLLGILFVLAIGIIFTRNLNTPVVKSSGELMVRYVILFCHFLNFAGTGFFIREPQSFTCKTRQTLICMSFTLCISYILMKSLKILLAFSSKLQNFLKCFYKPIPIIFTCTGIVVVCTLLIFAAPAVGQNVSLPRVIIFECEEGSILAFGSMLGYAAILAFMCFICAFKGRKFPENYNEAKFITFGMLIYFIAWITFIPIYTFGKYMLVVEIIIILISNYGICCMFFPKCYVILSKQETNTKSVFLKMIYSYSPHSAGSLAMSHSNITITNRTSAGGSAVQQKSRDLQLQGFAHICRENAMCRTKALPPKRISSI.

The first 15 residues, 1–15 (MALLMTCFVIVFAAS), serve as a signal peptide directing secretion. Over 16–568 (QPCQTPDDLV…KEMEYLDSLA (553 aa)) the chain is Extracellular. 4 N-linked (GlcNAc...) asparagine glycosylation sites follow: N251, N322, N532, and N544. The chain crosses the membrane as a helical span at residues 569-589 (ILLLALSLLGILFVLAIGIIF). At 590-604 (TRNLNTPVVKSSGEL) the chain is on the cytoplasmic side. Residues 605–625 (MVRYVILFCHFLNFAGTGFFI) traverse the membrane as a helical segment. The Extracellular portion of the chain corresponds to 626–641 (REPQSFTCKTRQTLIC). A helical transmembrane segment spans residues 642–662 (MSFTLCISYILMKSLKILLAF). Topologically, residues 663 to 676 (SSKLQNFLKCFYKP) are cytoplasmic. Residues 677–697 (IPIIFTCTGIVVVCTLLIFAA) form a helical membrane-spanning segment. The Extracellular portion of the chain corresponds to 698 to 718 (PAVGQNVSLPRVIIFECEEGS). A helical membrane pass occupies residues 719–739 (ILAFGSMLGYAAILAFMCFIC). Topologically, residues 740 to 754 (AFKGRKFPENYNEAK) are cytoplasmic. Residues 755 to 775 (FITFGMLIYFIAWITFIPIYT) form a helical membrane-spanning segment. Topologically, residues 776-779 (FGKY) are extracellular. Residues 780–800 (MLVVEIIIILISNYGICCMFF) form a helical membrane-spanning segment. The Cytoplasmic segment spans residues 801-888 (PKCYVILSKQ…ALPPKRISSI (88 aa)).

Belongs to the G-protein coupled receptor 3 family. Homodimer; disulfide-linked.

The protein resides in the cell membrane. Its function is as follows. Receptor activated by multiple ligands, including osteocalcin (BGLAP), basic amino acids, and various cations. Activated by amino acids with a preference for basic amino acids such as L-Lys, L-Arg and L-ornithine but also by small and polar amino acids. The L-alpha amino acids respond is augmented by divalent cations Ca(2+) and Mg(2+). Seems to act through a G(q)/G(11) and G(i)-coupled pathway. Regulates testosterone production by acting as a ligand for uncarboxylated osteocalcin hormone: osteocalcin-binding at the surface of Leydig cells initiates a signaling response that promotes the expression of enzymes required for testosterone synthesis in a CREB-dependent manner. Mediates the non-genomic effects of androgens in multiple tissue. May coordinate nutritional and hormonal anabolic signals through the sensing of extracellular amino acids, osteocalcin, divalent ions and its responsiveness to anabolic steroids. The protein is G-protein coupled receptor family C group 6 member A (GPRC6A) of Bos taurus (Bovine).